We begin with the raw amino-acid sequence, 598 residues long: Elongation factor 4 2 (598 aa).

In terms of domain architecture, tr-type G spans 2-184 (KHIRNFCIIA…GIVKNLPAPK (183 aa)). GTP contacts are provided by residues 14 to 19 (DHGKST) and 131 to 134 (NKID).

Belongs to the TRAFAC class translation factor GTPase superfamily. Classic translation factor GTPase family. LepA subfamily.

Its subcellular location is the cell inner membrane. It carries out the reaction GTP + H2O = GDP + phosphate + H(+). Functionally, required for accurate and efficient protein synthesis under certain stress conditions. May act as a fidelity factor of the translation reaction, by catalyzing a one-codon backward translocation of tRNAs on improperly translocated ribosomes. Back-translocation proceeds from a post-translocation (POST) complex to a pre-translocation (PRE) complex, thus giving elongation factor G a second chance to translocate the tRNAs correctly. Binds to ribosomes in a GTP-dependent manner. The polypeptide is Elongation factor 4 2 (Rhodopirellula baltica (strain DSM 10527 / NCIMB 13988 / SH1)).